Reading from the N-terminus, the 173-residue chain is NADH-ubiquinone oxidoreductase chain 6 (173 aa).

Transmembrane regions (helical) follow at residues 1–21 (MTYF…AVAS), 27–47 (YGVV…LSLG), 48–68 (VSFV…VVFV), 87–107 (VVGY…VGGF), and 139–159 (CGVG…FVVL).

Belongs to the complex I subunit 6 family.

It localises to the mitochondrion membrane. It carries out the reaction a ubiquinone + NADH + 5 H(+)(in) = a ubiquinol + NAD(+) + 4 H(+)(out). Its function is as follows. Core subunit of the mitochondrial membrane respiratory chain NADH dehydrogenase (Complex I) that is believed to belong to the minimal assembly required for catalysis. Complex I functions in the transfer of electrons from NADH to the respiratory chain. The immediate electron acceptor for the enzyme is believed to be ubiquinone. The sequence is that of NADH-ubiquinone oxidoreductase chain 6 (MT-ND6) from Ptychoramphus aleuticus (Cassin's auklet).